Here is a 289-residue protein sequence, read N- to C-terminus: 4-diphosphocytidyl-2-C-methyl-D-erythritol kinase (289 aa).

The active site involves lysine 10. 94 to 104 serves as a coordination point for ATP; sequence PVAAGLAGGSS. Aspartate 136 is an active-site residue.

Belongs to the GHMP kinase family. IspE subfamily.

The enzyme catalyses 4-CDP-2-C-methyl-D-erythritol + ATP = 4-CDP-2-C-methyl-D-erythritol 2-phosphate + ADP + H(+). It participates in isoprenoid biosynthesis; isopentenyl diphosphate biosynthesis via DXP pathway; isopentenyl diphosphate from 1-deoxy-D-xylulose 5-phosphate: step 3/6. In terms of biological role, catalyzes the phosphorylation of the position 2 hydroxy group of 4-diphosphocytidyl-2C-methyl-D-erythritol. The chain is 4-diphosphocytidyl-2-C-methyl-D-erythritol kinase from Bacillus anthracis.